A 199-amino-acid polypeptide reads, in one-letter code: Recombination protein RecR (199 aa).

The segment at 57 to 72 adopts a C4-type zinc-finger fold; the sequence is CQSCRTFTEETYCPIC. The 96-residue stretch at 81–176 folds into the Toprim domain; the sequence is EVICVVETPA…TVSRIAHGVP (96 aa).

This sequence belongs to the RecR family.

May play a role in DNA repair. It seems to be involved in an RecBC-independent recombinational process of DNA repair. It may act with RecF and RecO. The chain is Recombination protein RecR from Shewanella pealeana (strain ATCC 700345 / ANG-SQ1).